Reading from the N-terminus, the 1407-residue chain is DNA-directed RNA polymerase subunit beta' (1407 aa).

4 residues coordinate Zn(2+): C70, C72, C85, and C88. Mg(2+) contacts are provided by D460, D462, and D464. Positions 814, 888, 895, and 898 each coordinate Zn(2+).

Belongs to the RNA polymerase beta' chain family. In terms of assembly, the RNAP catalytic core consists of 2 alpha, 1 beta, 1 beta' and 1 omega subunit. When a sigma factor is associated with the core the holoenzyme is formed, which can initiate transcription. Requires Mg(2+) as cofactor. Zn(2+) is required as a cofactor.

It catalyses the reaction RNA(n) + a ribonucleoside 5'-triphosphate = RNA(n+1) + diphosphate. In terms of biological role, DNA-dependent RNA polymerase catalyzes the transcription of DNA into RNA using the four ribonucleoside triphosphates as substrates. The sequence is that of DNA-directed RNA polymerase subunit beta' from Cellvibrio japonicus (strain Ueda107) (Pseudomonas fluorescens subsp. cellulosa).